Consider the following 599-residue polypeptide: PR domain zinc finger protein 5 (599 aa).

An SET domain is found at 8–124 (DRFALKSSRV…TDTELLIGYL (117 aa)). 12 C2H2-type zinc fingers span residues 167–190 (FACP…QSLH), 199–221 (FKCE…FEQH), 231–256 (FVCK…ENVH), 264–286 (LICS…RKIH), 289–311 (FDCQ…MITH), 317–339 (YNCE…KVIH), 345–367 (YQCK…KKTH), 373–395 (FQCD…LLIH), 401–424 (FKCH…QVVH), 430–452 (YRCE…KKTH), 458–480 (KVCP…IRSH), and 486–508 (YQCP…IRTH). The C2H2-type 13; degenerate zinc-finger motif lies at 514 to 536 (YQCSECSKAFSQKRGLDEHKRTH). 2 C2H2-type zinc fingers span residues 542 to 564 (FQCD…KMTH) and 571 to 594 (AECH…DNIH).

Belongs to the class V-like SAM-binding methyltransferase superfamily. In terms of assembly, interacts with EHMT2/G9A, GFI1 and HDAC1.

The protein localises to the nucleus. Its function is as follows. Sequence-specific DNA-binding transcription factor. Represses transcription at least in part by recruitment of the histone methyltransferase EHMT2/G9A and histone deacetylases such as HDAC1. Regulates hematopoiesis-associated protein-coding and microRNA (miRNA) genes. May regulate the expression of proteins involved in extracellular matrix development and maintenance, connective tissue components and molecules regulating cell migration and adhesion. May cause G2/M arrest and apoptosis in cancer cells. The chain is PR domain zinc finger protein 5 (Prdm5) from Mus musculus (Mouse).